A 68-amino-acid chain; its full sequence is uncharacterized protein (68 aa).

Residues 1–42 are disordered; it reads MHLCQNGHYYKPHRASAEKVPYLKKKKKNSRNEGKAKKKNEK.

This is an uncharacterized protein from Saccharomyces cerevisiae (strain ATCC 204508 / S288c) (Baker's yeast).